Consider the following 232-residue polypeptide: Glutathione S-transferase U10 (232 aa).

Positions 6-85 (SKVILHGTWI…YIDETWTNSP (80 aa)) constitute a GST N-terminal domain. Glutathione-binding positions include 16–17 (ST), 42–43 (NK), 56–57 (KI), and 69–70 (ES). Residues 91 to 226 (DPYERAQVRF…FIQKYRQKCL (136 aa)) enclose the GST C-terminal domain.

It belongs to the GST superfamily. Tau family.

The protein localises to the cytoplasm. It is found in the cytosol. The enzyme catalyses RX + glutathione = an S-substituted glutathione + a halide anion + H(+). May be involved in the conjugation of reduced glutathione to a wide number of exogenous and endogenous hydrophobic electrophiles and have a detoxification role against certain herbicides. This is Glutathione S-transferase U10 (GSTU10) from Arabidopsis thaliana (Mouse-ear cress).